The primary structure comprises 272 residues: Sulfur carrier protein FdhD (272 aa).

The Cysteine persulfide intermediate role is filled by cysteine 114.

It belongs to the FdhD family.

Its subcellular location is the cytoplasm. Its function is as follows. Required for formate dehydrogenase (FDH) activity. Acts as a sulfur carrier protein that transfers sulfur from IscS to the molybdenum cofactor prior to its insertion into FDH. The chain is Sulfur carrier protein FdhD from Mycolicibacterium paratuberculosis (strain ATCC BAA-968 / K-10) (Mycobacterium paratuberculosis).